A 227-amino-acid polypeptide reads, in one-letter code: Paired immunoglobulin-like type 2 receptor beta (227 aa).

The signal sequence occupies residues 1 to 19 (MGRPLLLPLLLLLQPPAFL). At 20-191 (QPGGSTGSGP…WHLSLDTAIR (172 aa)) the chain is on the extracellular side. In terms of domain architecture, Ig-like V-type spans 21–143 (PGGSTGSGPS…SGRQQLQSIK (123 aa)). An N-linked (GlcNAc...) asparagine glycan is attached at asparagine 100. The chain crosses the membrane as a helical span at residues 192-212 (VALAVAVLKTVILGLLCLLLL). The Cytoplasmic segment spans residues 213–227 (WWRRRKGSRAPSSDF).

Its subcellular location is the membrane. Its function is as follows. Paired receptors consist of highly related activating and inhibitory receptors and are widely involved in the regulation of the immune system. PILRB is thought to act as a cellular signaling activating receptor that associates with ITAM-bearing adapter molecules on the cell surface. The protein is Paired immunoglobulin-like type 2 receptor beta (PILRB) of Homo sapiens (Human).